A 329-amino-acid polypeptide reads, in one-letter code: DNA-directed RNA polymerase subunit alpha (329 aa).

Positions 1 to 235 (MQGSVTEFLK…EQLEAFVDLR (235 aa)) are alpha N-terminal domain (alpha-NTD). An alpha C-terminal domain (alpha-CTD) region spans residues 249–329 (FDPILLRPVD…DWPPASIADE (81 aa)).

It belongs to the RNA polymerase alpha chain family. Homodimer. The RNAP catalytic core consists of 2 alpha, 1 beta, 1 beta' and 1 omega subunit. When a sigma factor is associated with the core the holoenzyme is formed, which can initiate transcription.

The catalysed reaction is RNA(n) + a ribonucleoside 5'-triphosphate = RNA(n+1) + diphosphate. Functionally, DNA-dependent RNA polymerase catalyzes the transcription of DNA into RNA using the four ribonucleoside triphosphates as substrates. This chain is DNA-directed RNA polymerase subunit alpha, found in Salmonella choleraesuis (strain SC-B67).